The following is a 173-amino-acid chain: MDIAIQHPWFKRALGPFYPSRLFDQFFGEGLFEYDLLPFLSSTISPYYRQSLFRTVLDSGISEVRSDRDKFVIFLDVKHFSPEDLTVKVQEDFVEIHGKHNERQDDHGYISREFHRRYRLPSNVDQTALSCSVSADGMLTFSGPKIPSGMDAGHSERAIPVSREEKPGSAPSS.

The residue at position 1 (M1) is an N-acetylmethionine. The interval 1-63 (MDIAIQHPWF…RTVLDSGISE (63 aa)) is required for complex formation with BFSP1 and BFSP2. A Deamidated glutamine; partial modification is found at Q6. Position 45 is a phosphoserine (S45). Residue Q50 is modified to Deamidated glutamine; partial. The sHSP domain occupies 52–162 (LFRTVLDSGI…GHSERAIPVS (111 aa)). Residue K70 is modified to N6-acetyllysine. Q90 bears the Deamidated glutamine; partial mark. K99 bears the N6-acetyllysine mark. H100 contributes to the Zn(2+) binding site. At N101 the chain carries Deamidated asparagine; partial. The Zn(2+) site is built by E102 and H107. At S122 the chain carries Phosphoserine. N123 carries the post-translational modification Deamidated asparagine; partial. Residues 144–173 (PKIPSGMDAGHSERAIPVSREEKPGSAPSS) form a disordered region. The span at 153–167 (GHSERAIPVSREEKP) shows a compositional bias: basic and acidic residues. Zn(2+) is bound at residue H154. A glycan (O-linked (GlcNAc) serine) is linked at S162.

Belongs to the small heat shock protein (HSP20) family. Heteromer composed of three CRYAA and one CRYAB subunits. Inter-subunit bridging via zinc ions enhances stability, which is crucial as there is no protein turn over in the lens. Can also form homodimers and homotetramers (dimers of dimers) which serve as the building blocks of homooligomers. Within homooligomers, the zinc-binding motif is created from residues of 3 different molecules. His-100 and Glu-102 from one molecule are ligands of the zinc ion, and His-107 and His-154 residues from additional molecules complete the site with tetrahedral coordination geometry. Part of a complex required for lens intermediate filament formation composed of BFSP1, BFSP2 and CRYAA. In terms of processing, acetylation at Lys-70 may increase chaperone activity. Post-translationally, undergoes age-dependent proteolytical cleavage at the C-terminus.

It localises to the cytoplasm. It is found in the nucleus. In terms of biological role, contributes to the transparency and refractive index of the lens. Acts as a chaperone, preventing aggregation of various proteins under a wide range of stress conditions. Required for the correct formation of lens intermediate filaments as part of a complex composed of BFSP1, BFSP2 and CRYAA. This Equus caballus (Horse) protein is Alpha-crystallin A chain (CRYAA).